We begin with the raw amino-acid sequence, 189 residues long: Crossover junction endodeoxyribonuclease RuvC (189 aa).

Active-site residues include Asp7, Glu68, and Asp141. Residues Asp7, Glu68, and Asp141 each contribute to the Mg(2+) site.

It belongs to the RuvC family. As to quaternary structure, homodimer which binds Holliday junction (HJ) DNA. The HJ becomes 2-fold symmetrical on binding to RuvC with unstacked arms; it has a different conformation from HJ DNA in complex with RuvA. In the full resolvosome a probable DNA-RuvA(4)-RuvB(12)-RuvC(2) complex forms which resolves the HJ. Mg(2+) is required as a cofactor.

It is found in the cytoplasm. It catalyses the reaction Endonucleolytic cleavage at a junction such as a reciprocal single-stranded crossover between two homologous DNA duplexes (Holliday junction).. The RuvA-RuvB-RuvC complex processes Holliday junction (HJ) DNA during genetic recombination and DNA repair. Endonuclease that resolves HJ intermediates. Cleaves cruciform DNA by making single-stranded nicks across the HJ at symmetrical positions within the homologous arms, yielding a 5'-phosphate and a 3'-hydroxyl group; requires a central core of homology in the junction. The consensus cleavage sequence is 5'-(A/T)TT(C/G)-3'. Cleavage occurs on the 3'-side of the TT dinucleotide at the point of strand exchange. HJ branch migration catalyzed by RuvA-RuvB allows RuvC to scan DNA until it finds its consensus sequence, where it cleaves and resolves the cruciform DNA. In Chlorobium phaeovibrioides (strain DSM 265 / 1930) (Prosthecochloris vibrioformis (strain DSM 265)), this protein is Crossover junction endodeoxyribonuclease RuvC.